A 145-amino-acid chain; its full sequence is Aminoglycoside N(6')-acetyltransferase type 1 (145 aa).

One can recognise an N-acetyltransferase domain in the interval 1–145 (MNIKPASEAS…KVVYFSKKID (145 aa)). Residues Trp22, Tyr65, and Glu78 each coordinate substrate. 80-82 (IYV) contributes to the acetyl-CoA binding site. Residue Asp114 coordinates substrate. Asn119 provides a ligand contact to acetyl-CoA. Position 135 (Glu135) interacts with substrate.

Homodimer.

The enzyme catalyses kanamycin B + acetyl-CoA = N(6')-acetylkanamycin B + CoA + H(+). Functionally, catalyzes the transfer of an acetyl group from acetyl-CoA to the 6'-amino group of aminoglycoside molecules conferring resistance to antibiotics containing the purpurosamine ring including amikacin, kanamycin, tobramycin and netilmicin. This Acinetobacter haemolyticus protein is Aminoglycoside N(6')-acetyltransferase type 1.